Consider the following 362-residue polypeptide: Caveolae-associated protein 4 (362 aa).

The disordered stretch occupies residues 1–24; that stretch reads MEHNGSASNAGKIHQNRLSSVTED. Residues 100–120 are a coiled coil; the sequence is IKDVKARVEKQQVRVTKVETK. Residues Ser152, Ser171, and Ser172 each carry the phosphoserine modification. 3 stretches are compositionally biased toward basic and acidic residues: residues 230–255, 275–289, and 305–320; these read RERLRQSGERLRQSGERLRQSGERFK, KAKDPKAEGQEVDRG, and HEFHSDEFSETEKEVT. Disordered regions lie at residues 230–289 and 305–346; these read RERL…VDRG and HEFH…KPQV. Tyr324 bears the Phosphotyrosine mark. The residue at position 334 (Thr334) is a Phosphothreonine. Ser353 carries the phosphoserine modification.

Belongs to the CAVIN family. As to quaternary structure, component of the CAVIN complex composed of CAVIN1, CAVIN2, CAVIN3 and CAVIN4. Interacts with CAVIN1. Interacts with CAVIN2; this augments the transactivation of NPPA. Interacts with CAV3, ADRA1A, ADRA1B, MAPK1 and MAPK3. Abundantly expressed in cardiac and skeletal muscle (at protein level). Weaker expression in aorta and lung. In heart, expressed in cardiomyocytes and vascular smooth muscle cells but not in other surrounding cells including vascular endothelial cells.

It is found in the cytoplasm. Its subcellular location is the myofibril. It localises to the sarcomere. The protein localises to the cytosol. The protein resides in the membrane. It is found in the caveola. Its subcellular location is the cell membrane. It localises to the sarcolemma. In terms of biological role, modulates the morphology of formed caveolae in cardiomyocytes, but is not required for caveolar formation. Facilitates the recruitment of MAPK1/3 to caveolae within cardiomyocytes and regulates alpha-1 adrenergic receptor-induced hypertrophic responses in cardiomyocytes through MAPK1/3 activation. Contributes to proper membrane localization and stabilization of caveolin-3 (CAV3) in cardiomyocytes. Induces RHOA activation and activates NPPA transcription and myofibrillar organization through the Rho/ROCK signaling pathway. The chain is Caveolae-associated protein 4 (Cavin4) from Mus musculus (Mouse).